The sequence spans 78 residues: uncharacterized protein (78 aa).

The span at 56–66 shows a compositional bias: basic and acidic residues; that stretch reads ERANAGKRVSE. Residues 56–78 are disordered; that stretch reads ERANAGKRVSEEEQINGKRKRKD.

This is an uncharacterized protein from Saccharomyces cerevisiae (strain ATCC 204508 / S288c) (Baker's yeast).